Reading from the N-terminus, the 539-residue chain is Hydroxylamine reductase (539 aa).

Residues C3, C6, C15, and C21 each contribute to the [4Fe-4S] cluster site. Residues H235, E259, C303, C394, C422, C447, E482, and K484 each contribute to the hybrid [4Fe-2O-2S] cluster site. At C394 the chain carries Cysteine persulfide.

This sequence belongs to the HCP family. It depends on [4Fe-4S] cluster as a cofactor. Hybrid [4Fe-2O-2S] cluster is required as a cofactor.

The protein resides in the cytoplasm. It catalyses the reaction A + NH4(+) + H2O = hydroxylamine + AH2 + H(+). In terms of biological role, catalyzes the reduction of hydroxylamine to form NH(3) and H(2)O. This Methanocaldococcus jannaschii (strain ATCC 43067 / DSM 2661 / JAL-1 / JCM 10045 / NBRC 100440) (Methanococcus jannaschii) protein is Hydroxylamine reductase.